Here is a 72-residue protein sequence, read N- to C-terminus: Heat shock factor-binding protein 1-like protein 1 (72 aa).

The stretch at 12–62 (DLLQNAAENLLLEVEEHFQALTTTLNLRMEEMGSRIEDLQRNVDDLMTQAG) forms a coiled coil.

The protein belongs to the HSBP1 family.

The sequence is that of Heat shock factor-binding protein 1-like protein 1 (Hsbp1l1) from Mus musculus (Mouse).